Reading from the N-terminus, the 631-residue chain is Nucleoside triphosphatase I (631 aa).

Residues 42–204 (FLGLDSMHSL…TMLVNLLRPG (163 aa)) form the Helicase ATP-binding domain. 55–62 (HETGVGKT) is a binding site for ATP. Positions 141-144 (DECH) match the DEXH box motif. One can recognise a Helicase C-terminal domain in the interval 367–532 (KFIDVCLGIL…EFVQLFRVFK (166 aa)). Residues 457-524 (DIFILDMTWN…EIIQSKSKEF (68 aa)) are binding to the cap-specific mRNA (nucleoside-2'-O-)-methyltransferase.

Belongs to the helicase family. NPH I subfamily. Monomer. Interacts (via C-terminus) with RAP94/OPG109 (via N-terminus). Interacts with the cap-specific mRNA (nucleoside-2'-O-)-methyltransferase OPG102.

Its subcellular location is the virion. The catalysed reaction is a ribonucleoside 5'-triphosphate + H2O = a ribonucleoside 5'-diphosphate + phosphate + H(+). DNA-dependent ATPase that acts as a 5' to 3' translocase on single-stranded DNA and thereby plays a role in transcription termination of viral early genes. Uses forward translocation in concert with the viral RNA polymerase RAP94/OPG109 subunit and the capping enzyme/VTF to catalyze release of UUUUUNU-containing nascent RNA from the elongation complex. In addition, acts as a positive elongation factor to assist transcription through problematic sequences. In Vaccinia virus (strain Copenhagen) (VACV), this protein is Nucleoside triphosphatase I (OPG123).